The chain runs to 132 residues: Agouti-signaling protein (132 aa).

The signal sequence occupies residues 1–22; that stretch reads MDVTRLLLATLLVFLCFFTAYS. N39 carries N-linked (GlcNAc...) asparagine glycosylation. A disordered region spans residues 62-88; the sequence is ISRKEAEKKRSSKKEASMKKVARPRTP. A compositionally biased stretch (basic and acidic residues) spans 63–79; the sequence is SRKEAEKKRSSKKEASM. Disulfide bonds link C93–C108, C100–C114, C107–C125, C111–C132, and C116–C123. In terms of domain architecture, Agouti spans 93–132; the sequence is CVATRDSCKPPAPACCDPCASCQCRFFRSACSCRVLSLNC.

It localises to the secreted. Involved in the regulation of melanogenesis. The binding of ASP to MC1R precludes alpha-MSH initiated signaling and thus blocks production of cAMP, leading to a down-regulation of eumelanogenesis (brown/black pigment) and thus increasing synthesis of pheomelanin (yellow/red pigment). This is Agouti-signaling protein (ASIP) from Macaca radiata (Bonnet macaque).